A 410-amino-acid polypeptide reads, in one-letter code: Demethyl-4-deoxygadusol synthase (410 aa).

Residues D56–N58, E87–K90, G119–D123, T143–T144, K156, K165, and L183–T186 contribute to the NAD(+) site. The Zn(2+) site is built by E198, H271, and H287.

It belongs to the sugar phosphate cyclases superfamily. DDGS family. As to quaternary structure, homodimer. It depends on NAD(+) as a cofactor. The cofactor is Co(2+). Zn(2+) serves as cofactor.

It catalyses the reaction D-sedoheptulose 7-phosphate = (R)-demethyl-4-deoxygadusol + phosphate + H2O + H(+). Catalyzes the conversion of sedoheptulose 7-phosphate to demethyl-4-deoxygadusol (DDG). Involved in the synthesis of the mycosporine-like amino acid shinorine, a natural sunscreen compound that protects the cell against UV radiation. The protein is Demethyl-4-deoxygadusol synthase of Trichormus variabilis (strain ATCC 29413 / PCC 7937) (Anabaena variabilis).